The following is a 365-amino-acid chain: MANISGFGITRSLIHSFDPHGKHYRPTIKPTTGFSASADAERLHRSMKGPGTNELAIINILARRTNYERQEICQSYKSLYKQDLKDDLKSDTSGDFRKVLCQLIVDTPYMLAKSLYYAMKGLGTNDRVLIEIFTTLWNDEMKAVADAYKQVLKDKGSEESERSLVTDMKKETCGDYEYALLSLVQAERDDIPILQLKAIPDKGVNSIINHELAEADAKDLYASGAGRVGTSERRITRVICNRTPYQLYLTSEIYFKMYGKTLLEHIESETSGDYRKLLVAVLRYAIDRPSLIAEWLHDSMAGLGTKDYALMRLLITRSEIDLQDIMDAYESIYGKSLLNAVKDDTSGDYRRTLCVLMGEIYNQQQ.

Annexin repeat units follow at residues 34-105 (FSAS…QLIV), 106-185 (DTPY…SLVQ), 211-283 (ELAE…AVLR), and 287-358 (DRPS…VLMG). Residues Met-47, Gly-49, Gly-51, Thr-52, Glu-54, Asp-91, Met-119, Gly-121, Gly-123, Asp-126, Lys-169, Glu-171, Thr-172, Glu-177, Asp-273, Met-300, Gly-302, Leu-303, Gly-304, and Asp-344 each coordinate Ca(2+).

The protein belongs to the annexin family. Homodimer.

The protein resides in the tegument. The protein localises to the secreted. Its subcellular location is the extracellular exosome. It localises to the host cell. Its function is as follows. Involved in reproduction of the worm. Involved in host-parasite interaction. Delivered into the host cell by means of parasite exosomes. Binds to acidic phospholipid membranes in a calcium-dependent manner in vitro. Causes aggregation of liposomes in the presence of calcium, but not in its absence. Likely to promote membrane fusion. May provide structural integrity within the tegument. The protein is Annexin B22 of Schistosoma mansoni (Blood fluke).